Reading from the N-terminus, the 349-residue chain is Desmethyl-yatein O-methyltransferase (349 aa).

Residues Gly-193, Asp-216, Asp-236, Met-237, Met-249, and Lys-250 each contribute to the S-adenosyl-L-homocysteine site. His-254 functions as the Proton acceptor in the catalytic mechanism. Residues Glu-282 and Glu-314 contribute to the active site.

This sequence belongs to the class I-like SAM-binding methyltransferase superfamily. Cation-independent O-methyltransferase family. COMT subfamily. Homodimer. As to expression, mostly expressed in stems, and, to a lower extent, in leaves.

It catalyses the reaction (-)-5'-demethylyatein + S-adenosyl-L-methionine = (-)-yatein + S-adenosyl-L-homocysteine + H(+). It participates in aromatic compound metabolism; phenylpropanoid biosynthesis. In terms of biological role, O-methyltransferase involved in the biosynthesis of etoposide, a chemotherapeutic compound of the topoisomerase inhibitor family. Catalyzes the methylation of (-)-5'-demethylyatein to produce (-)-yatein. This chain is Desmethyl-yatein O-methyltransferase, found in Sinopodophyllum hexandrum (Himalayan may apple).